Reading from the N-terminus, the 527-residue chain is UvrABC system protein C (527 aa).

Residues 9-87 (KNPGCYIYKN…IKKYSPKYNI (79 aa)) form the GIY-YIG domain. A UVR domain is found at 191–226 (DSLIHELKNEMNEKSKNLQFEEALLIREEINAIERL).

Belongs to the UvrC family. In terms of assembly, interacts with UvrB in an incision complex.

The protein localises to the cytoplasm. The UvrABC repair system catalyzes the recognition and processing of DNA lesions. UvrC both incises the 5' and 3' sides of the lesion. The N-terminal half is responsible for the 3' incision and the C-terminal half is responsible for the 5' incision. The protein is UvrABC system protein C of Methanococcus maripaludis (strain DSM 14266 / JCM 13030 / NBRC 101832 / S2 / LL).